Reading from the N-terminus, the 144-residue chain is AP-4 complex subunit sigma-1 (144 aa).

This sequence belongs to the adaptor complexes small subunit family. As to quaternary structure, adaptor protein complex 4 (AP-4) is a heterotetramer composed of two large adaptins (epsilon-type subunit AP4E1 and beta-type subunit AP4B1), a medium adaptin (mu-type subunit AP4M1) and a small adaptin (sigma-type AP4S1).

Its subcellular location is the golgi apparatus. The protein resides in the trans-Golgi network membrane. In terms of biological role, component of the adaptor protein complex 4 (AP-4). Adaptor protein complexes are vesicle coat components involved both in vesicle formation and cargo selection. They control the vesicular transport of proteins in different trafficking pathways. AP-4 forms a non clathrin-associated coat on vesicles departing the trans-Golgi network (TGN) and may be involved in the targeting of proteins from the trans-Golgi network (TGN) to the endosomal-lysosomal system. It is also involved in protein sorting to the basolateral membrane in epithelial cells and the proper asymmetric localization of somatodendritic proteins in neurons. AP-4 is involved in the recognition and binding of tyrosine-based sorting signals found in the cytoplasmic part of cargos, but may also recognize other types of sorting signal. In Mus musculus (Mouse), this protein is AP-4 complex subunit sigma-1.